Reading from the N-terminus, the 230-residue chain is Probable phosphatase IndB (230 aa).

Residue D8 is the Nucleophile of the active site. Mg(2+)-binding residues include D8, D10, and D169. Residue D10 is the Proton donor of the active site.

The protein belongs to the HAD-like hydrolase superfamily. The cofactor is Mg(2+).

Its function is as follows. Part of an operon that could be involved in the biosynthesis of the blue pigment indigoidine, which is implicated in pathogenicity and protection from oxidative stress. This Dickeya dadantii (strain 3937) (Erwinia chrysanthemi (strain 3937)) protein is Probable phosphatase IndB.